We begin with the raw amino-acid sequence, 514 residues long: MSSNKKPMVLVILDGYGHREEQQDNAILNAKTPVMDRLWQQQPHQLIAASGLDVGLPDGQMGNSEVGHVNLGAGRIVYQDLTRLDKEIKEGDFFANPTLTAAVDKAVQAGKAVHIMGLLSPGGVHSHEDHILAMIELASQRGAKAVYLHAFLDGRDTPPRSAEASLQRFSDAFAKLGTGRIASLIGRYYAMDRDNRWDRVQLAYDLLTQAKGDYVTDNAVGALQAAYERGENDEFVKPTVLQAAGEAKAELHDGDALIFMNFRADRARQIVRSFVNADFDGFPRAKIINFGDFVMLTEYAADIKAPCAYPPASLSNTFGEWLMKHDKTQLRISETEKYAHVTFFFNGGVEEPFTGEDRVLINSPKVATYDLQPEMSAAELTDKLLAAIASGKYDAIICNYPNGDMVGHTGVYDAAVKAVETLDNCIAQVVEAVKAVDGQLLITADHGNAEQMRDPATGQAHTAHTSLPVPLIYIGKPASAVNGGKLSDIAPTMLALMGMEIPQEMTGKPLFIVE.

2 residues coordinate Mn(2+): Asp14 and Ser64. The active-site Phosphoserine intermediate is Ser64. Substrate contacts are provided by residues His125, 155-156, Arg187, Arg193, 263-266, and Lys337; these read RD and RADR. Residues Asp404, His408, Asp445, His446, and His464 each coordinate Mn(2+).

The protein belongs to the BPG-independent phosphoglycerate mutase family. As to quaternary structure, monomer. Requires Mn(2+) as cofactor.

The catalysed reaction is (2R)-2-phosphoglycerate = (2R)-3-phosphoglycerate. The protein operates within carbohydrate degradation; glycolysis; pyruvate from D-glyceraldehyde 3-phosphate: step 3/5. Functionally, catalyzes the interconversion of 2-phosphoglycerate and 3-phosphoglycerate. This Serratia proteamaculans (strain 568) protein is 2,3-bisphosphoglycerate-independent phosphoglycerate mutase.